Consider the following 228-residue polypeptide: Leucine rich adaptor protein 1-like (228 aa).

N-acetylmethionine is present on M1. The segment at 1–89 (MEDSPLPDLR…GSPRGSHSSA (89 aa)) is disordered. Basic and acidic residues-rich tracts occupy residues 8–21 (DLRDIELKLGRKVP) and 28–42 (LRGEEPVPRERDRDP). Positions 44 to 56 (GGSGGGGGGGGGC) are enriched in gly residues. The span at 57 to 88 (SSSSSYCSFPPSLSSSSSSSPTSGSPRGSHSS) shows a compositional bias: low complexity.

This chain is Leucine rich adaptor protein 1-like (LURAP1L), found in Homo sapiens (Human).